The primary structure comprises 303 residues: Probable 5-dehydro-4-deoxyglucarate dehydratase (303 aa).

The protein belongs to the DapA family.

It carries out the reaction 5-dehydro-4-deoxy-D-glucarate + H(+) = 2,5-dioxopentanoate + CO2 + H2O. It functions in the pathway carbohydrate acid metabolism; D-glucarate degradation; 2,5-dioxopentanoate from D-glucarate: step 2/2. The chain is Probable 5-dehydro-4-deoxyglucarate dehydratase from Polaromonas naphthalenivorans (strain CJ2).